The primary structure comprises 488 residues: MDDTLAKLPRAFSGATVLVLGDVMLDRFVYGAVDRISPEAPVPVIAVERETTMLGGAGNVARNVAALGGRAVLVGVIGDDDAGRALTAMIDREPSLDSALIVDAKRRTTEKTRYISGSHQMLRADREDRGEADGVALLAAFNAHLREVDVVVLSDYAKGVLTPVVLRAAIAAANAAGKPVIVDPKSRDFSRYDGATLIKPNRREAAEATGVTGAGDEVAAEAADAILSTAPNLAAALITRGRAGMTLAVRGEAPVHLPATALEVFDVSGAGDTVAATLALALARGASPLDAARLANLAAGLVVAKLGTDVVTADELVGLAHGEHADPAVDKIADLDGALAIVAGWRARGLKVGFTNGCFDLLHPGHVSLLAQAKAACDRLIVGLNTDASVQRLKGPTRPVQKETGRATVLASLSAVDLVVLFDEQTPLNLIRAFRPDVLVKGADYTVETVVGSDVVLAYGGKVVLAQLKAGQSTTNLIGRMNAPAVGG.

A ribokinase region spans residues 1–327; it reads MDDTLAKLPR…GLAHGEHADP (327 aa). 201–204 provides a ligand contact to ATP; sequence NRRE. Asp-272 is an active-site residue. The tract at residues 354-488 is cytidylyltransferase; that stretch reads FTNGCFDLLH…GRMNAPAVGG (135 aa).

In the N-terminal section; belongs to the carbohydrate kinase PfkB family. The protein in the C-terminal section; belongs to the cytidylyltransferase family. Homodimer.

The catalysed reaction is D-glycero-beta-D-manno-heptose 7-phosphate + ATP = D-glycero-beta-D-manno-heptose 1,7-bisphosphate + ADP + H(+). It catalyses the reaction D-glycero-beta-D-manno-heptose 1-phosphate + ATP + H(+) = ADP-D-glycero-beta-D-manno-heptose + diphosphate. Its pathway is nucleotide-sugar biosynthesis; ADP-L-glycero-beta-D-manno-heptose biosynthesis; ADP-L-glycero-beta-D-manno-heptose from D-glycero-beta-D-manno-heptose 7-phosphate: step 1/4. It participates in nucleotide-sugar biosynthesis; ADP-L-glycero-beta-D-manno-heptose biosynthesis; ADP-L-glycero-beta-D-manno-heptose from D-glycero-beta-D-manno-heptose 7-phosphate: step 3/4. Catalyzes the phosphorylation of D-glycero-D-manno-heptose 7-phosphate at the C-1 position to selectively form D-glycero-beta-D-manno-heptose-1,7-bisphosphate. Functionally, catalyzes the ADP transfer from ATP to D-glycero-beta-D-manno-heptose 1-phosphate, yielding ADP-D-glycero-beta-D-manno-heptose. The sequence is that of Bifunctional protein HldE from Caulobacter sp. (strain K31).